Here is a 471-residue protein sequence, read N- to C-terminus: Serine/threonine-protein kinase AtPK2/AtPK19 (471 aa).

The interval 1–21 is disordered; the sequence is MVSSQCSVANKNQTGKPFQKH. The 256-residue stretch at 140-395 folds into the Protein kinase domain; that stretch reads FEVLKVVGQG…AEEIKKHKWF (256 aa). ATP contacts are provided by residues 146 to 154 and K169; that span reads VGQGAFGKV. D263 acts as the Proton acceptor in catalysis. Residues 281–307 are activation loop; it reads DFGLAKEFEENTRSNSMCGTTEYMAPE. S296 carries the post-translational modification Phosphoserine; by PDPK1. Positions 396–466 constitute an AGC-kinase C-terminal domain; that stretch reads KAINWKKLEA…VRPPHSFLHR (71 aa). At T455 the chain carries Phosphothreonine; by TOR.

The protein belongs to the protein kinase superfamily. AGC Ser/Thr protein kinase family. S6 kinase subfamily. Interacts with TAP46. Binds to MRF1. Post-translationally, undergoes serine-specific autophosphorylation. Phosphorylated at Thr-455 by TOR.

It carries out the reaction L-seryl-[protein] + ATP = O-phospho-L-seryl-[protein] + ADP + H(+). The enzyme catalyses L-threonyl-[protein] + ATP = O-phospho-L-threonyl-[protein] + ADP + H(+). With respect to regulation, activated by PDK1. Downstream effector of TOR signaling pathway. May be involved in adaptation of plant to cold or high-salt conditions. Mediates the phosphorylation of MRFs (e.g. MRF1). This is Serine/threonine-protein kinase AtPK2/AtPK19 (ATPK2) from Arabidopsis thaliana (Mouse-ear cress).